The chain runs to 772 residues: MLSLKKYLTEGLLQFTILLSLIGVRVDVDTYLTSQLPPLREIILGPSSAYTQTQFHNLRNTLDGYGIHPKSIDLDNYFTARRLLSQVRALDRFQVPTTEVNAWLVHRDPEGSVSGSQPNSGLALESSSGLQDVTGPDNGVRESETEQGFGEDLEDLGAVAPPVSGDLTKEDIDLIDILWRQDIDLGAGREVFDYSHRQKEQDVEKELRDGGEQDTWAGEGAEALARNLLVDGETGESFPAQVPSGEDQTALSLEECLRLLEATCPFGENAEFPADISSITEAVPSESEPPALQNNLLSPLLAGTESPFDLEQQWQDLMSIMEMQAMEVNTSASEILYSAPPGDPLSTNYSLAPNTPINQNVSPHQASLGGCSQDFLLFSPEVESLPVASSSTLLPLAPSNSTSLNSTFGSTNLTGLFFPPQLNGTANDTAGPELPDPLGGLLDEAMLDEISLMDLAIEEGFNPVQASQLEEEFDSDSGLSLDSSHSPSSLSSSEGSSSSSSSSSSSSSSASSSASSSFSEEGAVGYSSDSETLDLEEAEGAVGYQPEYSKFCRMSYQDPAQLSCLPYLEHVGHNHTYNMAPSALDSADLPPPSALKKGSKEKLADFLDKQMSRDEHRARAMKIPFTNDKIINLPVEEFNELLSKYQLSEAQLSLIRDIRRRGKNKMAAQNCRKRKLDTILNLERDVEDLQRDKARLLREKVEFLRSLRQMKQKVQSLYQEVFGRLRDENGRPYSPSQYALQYAGDGSVLLIPRTMADQQARRQERKPKDRRK.

Residues 7–24 (YLTEGLLQFTILLSLIGV) form a helical; Signal-anchor for type II membrane protein membrane-spanning segment. Residues 108-148 (DPEGSVSGSQPNSGLALESSSGLQDVTGPDNGVRESETEQG) form a disordered region. Positions 113 to 131 (VSGSQPNSGLALESSSGLQ) are enriched in polar residues. A cholesterol recognition/amino acid consensus (CRAC) region region spans residues 191 to 199 (VFDYSHRQK). An N-linked (GlcNAc...) asparagine glycan is attached at Asn-348. Residues 379–383 (SPEVE) are CPD. N-linked (GlcNAc...) asparagine glycans are attached at residues Asn-412 and Asn-423. The interval 470–532 (EEEFDSDSGL…AVGYSSDSET (63 aa)) is disordered. The short motif at 476 to 480 (DSGLS) is the Destruction motif element. Positions 476-523 (DSGLSLDSSHSPSSLSSSEGSSSSSSSSSSSSSSASSSASSSFSEEGA) are enriched in low complexity. The residue at position 528 (Ser-528) is a Phosphoserine; by CK2. Position 599 is a phosphoserine; by PKA (Ser-599). A bZIP domain is found at 654–717 (LIRDIRRRGK…RQMKQKVQSL (64 aa)). A basic motif region spans residues 656–675 (RDIRRRGKNKMAAQNCRKRK). Positions 682–696 (LERDVEDLQRDKARL) are leucine-zipper. Residues 753-772 (RTMADQQARRQERKPKDRRK) are disordered. A Nuclear localization signal motif is present at residues 761-768 (RRQERKPK). Residues 763–772 (QERKPKDRRK) are compositionally biased toward basic residues.

It belongs to the bZIP family. CNC subfamily. As to quaternary structure, interacts with KEAP1. Interacts (via CPD region) with FBXW7; leading to its ubiquitination and degradation. Interacts with SYVN1/HRD1; leading to its ubiquitination and degradation. Interacts (when ubiquitinated) with DDI2; leading to its cleavage. In terms of assembly, interacts (via the bZIP domain) with small MAF protein (MAFF, MAFG or MAFK); required for binding to antioxidant response elements (AREs) on DNA. Interacts (via Destruction motif) with BTRC; leading to its ubiquitination and degradation. Interacts with CEBPB; the heterodimer represses expression of DSPP during odontoblast differentiation. Interacts with MOTS-c, a peptide produced by the mitochondrially encoded 12S rRNA MT-RNR1. In terms of processing, cleaved at Leu-104 by the aspartyl protease DDI2 following retrotranslocation, releasing the protein from the endoplasmic reticulum membrane and forming the transcription factor NRF1 that translocates into the nucleus. Ubiquitination is prerequisite for cleavage by aspartyl protease DDI2. Post-translationally, N-glycosylated in normal conditions, when it has a single-pass type II membrane protein topology, with the DNA-binding domain facing the endoplasmic reticulum lumen. Deglycosylated during retrotranslocation to the cytosolic side of the membrane, to have a single-pass type III membrane protein topology with the major part of the protein facing the cytosol. Ubiquitinated by the SCF(FBXW7) complex and SYVN1/HRD1, leading to its degradation by the proteasome. Ubiquitinated during retrotranslocation to the cytosolic side of the membrane: ubiquitination does not lead to degradation and is required for processing by the aspartyl protease DDI2 and subsequent release from the endoplasmic reticulum membrane. In terms of processing, phosphorylation by CK2 at Ser-528 inhibits transcription factor activity, possibly by affecting DNA-binding activity. Phosphorylation at Ser-599 is required for interaction with CEBPB. Post-translationally, ubiquitinated by the SCF(BTRC) complex in the nucleus, leading to its degradation by the proteasome.

Its subcellular location is the endoplasmic reticulum membrane. It localises to the nucleus. Endoplasmic reticulum membrane sensor that translocates into the nucleus in response to various stresses to act as a transcription factor. Constitutes a precursor of the transcription factor NRF1. Able to detect various cellular stresses, such as cholesterol excess, oxidative stress or proteasome inhibition. In response to stress, it is released from the endoplasmic reticulum membrane following cleavage by the protease DDI2 and translocates into the nucleus to form the transcription factor NRF1. Acts as a key sensor of cholesterol excess: in excess cholesterol conditions, the endoplasmic reticulum membrane form of the protein directly binds cholesterol via its CRAC motif, preventing cleavage and release of the transcription factor NRF1, thereby allowing expression of genes promoting cholesterol removal, such as CD36. Involved in proteasome homeostasis: in response to proteasome inhibition, it is released from the endoplasmic reticulum membrane, translocates to the nucleus and activates expression of genes encoding proteasome subunits. In terms of biological role, CNC-type bZIP family transcription factor that translocates to the nucleus and regulates expression of target genes in response to various stresses. Heterodimerizes with small-Maf proteins (MAFF, MAFG or MAFK) and binds DNA motifs including the antioxidant response elements (AREs), which regulate expression of genes involved in oxidative stress response. Activates or represses expression of target genes, depending on the context. Plays a key role in cholesterol homeostasis by acting as a sensor of cholesterol excess: in low cholesterol conditions, translocates into the nucleus and represses expression of genes involved in defense against cholesterol excess, such as CD36. In excess cholesterol conditions, the endoplasmic reticulum membrane form of the protein directly binds cholesterol via its CRAC motif, preventing cleavage and release of the transcription factor NRF1, thereby allowing expression of genes promoting cholesterol removal. Critical for redox balance in response to oxidative stress: acts by binding the AREs motifs on promoters and mediating activation of oxidative stress response genes, such as GCLC, GCLM, GSS, MT1 and MT2. Plays an essential role during fetal liver hematopoiesis: probably has a protective function against oxidative stress and is involved in lipid homeostasis in the liver. Involved in proteasome homeostasis: in response to proteasome inhibition, mediates the 'bounce-back' of proteasome subunits by translocating into the nucleus and activating expression of genes encoding proteasome subunits. Also involved in regulating glucose flux. Together with CEBPB; represses expression of DSPP during odontoblast differentiation. In response to ascorbic acid induction, activates expression of SP7/Osterix in osteoblasts. The chain is Endoplasmic reticulum membrane sensor NFE2L1 from Pongo abelii (Sumatran orangutan).